We begin with the raw amino-acid sequence, 319 residues long: Taste receptor type 2 member 14 (319 aa).

At 1–7 the chain is on the extracellular side; the sequence is MDGVIKS. Residues 8 to 28 form a helical membrane-spanning segment; it reads IFTFILILEFIIGNLGNSFIV. The Cytoplasmic segment spans residues 29 to 55; it reads LVNCIDWVKRRKISLVDQLLIALAISR. A helical transmembrane segment spans residues 56 to 76; that stretch reads ISLVWSIFGSWCVSVVFPALF. Residues 77–87 are Extracellular-facing; sequence ATEKLLRMLTN. Cholesterol-binding residues include Thr86 and Trp89. Residues 88–108 form a helical membrane-spanning segment; sequence IWTVTNHFSVWLATILGTFYF. Topologically, residues 109-129 are cytoplasmic; that stretch reads LKIANFSNSIFLYLKWRVKKV. Residues 130–150 form a helical membrane-spanning segment; sequence VLVLLLVTLVLLFLNILLINI. Residues 151-184 are Extracellular-facing; that stretch reads HINASINGYRGNMTCSSASCNFIRFSSAIALTST. 2 N-linked (GlcNAc...) asparagine glycosylation sites follow: Asn153 and Asn162. Ala180 contributes to the cholesterol binding site. The chain crosses the membrane as a helical span at residues 185–205; sequence VFILIPFTLSLATFLLLSFSL. The Cytoplasmic portion of the chain corresponds to 206–232; the sequence is WKHRKKMQHTVKGYRDVSTKAHRGVMQ. The chain crosses the membrane as a helical span at residues 233 to 253; sequence TVITFLLLYAVFFLTFFVSIW. The Extracellular portion of the chain corresponds to 254 to 261; the sequence is ISERLKEN. Residues 262-282 form a helical membrane-spanning segment; that stretch reads QIIILSEMMGLAYPSGHSCVL. Ile265 and Glu268 together coordinate cholesterol. The Cytoplasmic segment spans residues 283 to 317; it reads ILGNKKLRQASLSVLWWLRYRFKDGELSGHKEFRE.

The protein belongs to the G-protein coupled receptor T2R family. In terms of assembly, core component of the TAS2R14-GNAI1 complex, consisting of TAS2R14, GNAI1, GNB1 and GNG2; within the complex interacts with GNAI1. Core component of the TAS2R14-GNAT3 complex, consisting of TAS2R14, GNAT3, GNB1 and GNG2; within the complex interacts with GNAT3. Core component of the TAS2R14-GNAS2 complex, consisting of TAS2R14, GNAS2, GNB1 and GNG2; within the complex interacts with GNAS2.

The protein localises to the membrane. The enzyme catalyses Ca(2+)(in) = Ca(2+)(out). It carries out the reaction 3',5'-cyclic AMP(in) = 3',5'-cyclic AMP(out). With respect to regulation, basal activity is enhanced by binding to bitter tastants, such as flufenamic acid and aristolochic acid. Regulated by cholesterol in a concentration-dependent manner. Its function is as follows. Gustducin-linked G-protein coupled receptor that plays a role in the perception of bitterness. The activity of this receptor stimulates GNAT3, activating the gustducin G-protein pathway. Likely plays a role in sensing the chemical composition of the gastrointestinal content and other extra-oral tissues via the inhibitory G-protein pathways. The polypeptide is Taste receptor type 2 member 14 (TAS2R14) (Papio hamadryas (Hamadryas baboon)).